We begin with the raw amino-acid sequence, 306 residues long: UDP-3-O-acyl-N-acetylglucosamine deacetylase (306 aa).

H79, H239, and D243 together coordinate Zn(2+). Residue H266 is the Proton donor of the active site.

Belongs to the LpxC family. Zn(2+) serves as cofactor.

The catalysed reaction is a UDP-3-O-[(3R)-3-hydroxyacyl]-N-acetyl-alpha-D-glucosamine + H2O = a UDP-3-O-[(3R)-3-hydroxyacyl]-alpha-D-glucosamine + acetate. It participates in glycolipid biosynthesis; lipid IV(A) biosynthesis; lipid IV(A) from (3R)-3-hydroxytetradecanoyl-[acyl-carrier-protein] and UDP-N-acetyl-alpha-D-glucosamine: step 2/6. Functionally, catalyzes the hydrolysis of UDP-3-O-myristoyl-N-acetylglucosamine to form UDP-3-O-myristoylglucosamine and acetate, the committed step in lipid A biosynthesis. This chain is UDP-3-O-acyl-N-acetylglucosamine deacetylase, found in Glaesserella parasuis serovar 5 (strain SH0165) (Haemophilus parasuis).